Here is a 436-residue protein sequence, read N- to C-terminus: Adenylyltransferase and sulfurtransferase UBA4 (436 aa).

Residues Gly-74, Asp-95, 102–106 (SNLHR), Lys-119, and 163–164 (DT) contribute to the ATP site. Residues Cys-205 and Cys-208 each contribute to the Zn(2+) site. Cys-222 functions as the Glycyl thioester intermediate; for adenylyltransferase activity in the catalytic mechanism. 2 residues coordinate Zn(2+): Cys-283 and Cys-286. In terms of domain architecture, Rhodanese spans 335-434 (NEKDHILIDV…YIDEEDHSYP (100 aa)). The active-site Cysteine persulfide intermediate; for sulfurtransferase activity is Cys-393.

In the N-terminal section; belongs to the HesA/MoeB/ThiF family. UBA4 subfamily. The cofactor is Zn(2+).

It is found in the cytoplasm. The protein resides in the cytosol. Its pathway is tRNA modification; 5-methoxycarbonylmethyl-2-thiouridine-tRNA biosynthesis. Functionally, plays a central role in 2-thiolation of mcm(5)S(2)U at tRNA wobble positions of cytosolic tRNA(Lys), tRNA(Glu) and tRNA(Gln). Acts by mediating the C-terminal thiocarboxylation of sulfur carrier URM1. Its N-terminus first activates URM1 as acyl-adenylate (-COAMP), then the persulfide sulfur on the catalytic cysteine is transferred to URM1 to form thiocarboxylation (-COSH) of its C-terminus. The reaction probably involves hydrogen sulfide that is generated from the persulfide intermediate and that acts as a nucleophile towards URM1. Subsequently, a transient disulfide bond is formed. Does not use thiosulfate as sulfur donor; NFS1 probably acting as a sulfur donor for thiocarboxylation reactions. Prior mcm(5) tRNA modification by the elongator complex is required for 2-thiolation. May also be involved in protein urmylation. The sequence is that of Adenylyltransferase and sulfurtransferase UBA4 from Vanderwaltozyma polyspora (strain ATCC 22028 / DSM 70294 / BCRC 21397 / CBS 2163 / NBRC 10782 / NRRL Y-8283 / UCD 57-17) (Kluyveromyces polysporus).